We begin with the raw amino-acid sequence, 306 residues long: Acetyl-coenzyme A carboxylase carboxyl transferase subunit beta (306 aa).

The CoA carboxyltransferase N-terminal domain maps to 25 to 294 (VWTKCDSCGQ…PQDPLPHEPR (270 aa)). Residues cysteine 29, cysteine 32, cysteine 48, and cysteine 51 each coordinate Zn(2+). The C4-type zinc-finger motif lies at 29–51 (CDSCGQVLYRAELERNLEVCPKC). The disordered stretch occupies residues 281–306 (NRPQPQDPLPHEPRPDAVPEDHQDEV). Residues 289–306 (LPHEPRPDAVPEDHQDEV) show a composition bias toward basic and acidic residues.

It belongs to the AccD/PCCB family. As to quaternary structure, acetyl-CoA carboxylase is a heterohexamer composed of biotin carboxyl carrier protein (AccB), biotin carboxylase (AccC) and two subunits each of ACCase subunit alpha (AccA) and ACCase subunit beta (AccD). The cofactor is Zn(2+).

The protein localises to the cytoplasm. It carries out the reaction N(6)-carboxybiotinyl-L-lysyl-[protein] + acetyl-CoA = N(6)-biotinyl-L-lysyl-[protein] + malonyl-CoA. It functions in the pathway lipid metabolism; malonyl-CoA biosynthesis; malonyl-CoA from acetyl-CoA: step 1/1. Functionally, component of the acetyl coenzyme A carboxylase (ACC) complex. Biotin carboxylase (BC) catalyzes the carboxylation of biotin on its carrier protein (BCCP) and then the CO(2) group is transferred by the transcarboxylase to acetyl-CoA to form malonyl-CoA. This Sodalis glossinidius (strain morsitans) protein is Acetyl-coenzyme A carboxylase carboxyl transferase subunit beta.